Reading from the N-terminus, the 163-residue chain is Neurotrophin-3 (163 aa).

The signal sequence occupies residues 1–3 (IQS). Residues 4-119 (SSMDQGILTE…VLNRTSRRKR (116 aa)) constitute a propeptide that is removed on maturation. A disordered region spans residues 36-61 (QTARTKDGMQTTVKKTEAEADARASQ). The segment covering 49 to 61 (KKTEAEADARASQ) has biased composition (basic and acidic residues). A glycan (N-linked (GlcNAc...) asparagine) is linked at Asn-112.

This sequence belongs to the NGF-beta family.

The protein resides in the secreted. Seems to promote the survival of visceral and proprioceptive sensory neurons. This chain is Neurotrophin-3 (NTF3), found in Boa constrictor (Boa).